The primary structure comprises 254 residues: Demethylmenaquinone methyltransferase (254 aa).

S-adenosyl-L-methionine-binding positions include threonine 62, aspartate 80, aspartate 122–glycine 123, and serine 139.

Belongs to the class I-like SAM-binding methyltransferase superfamily. MenG/UbiE family.

The enzyme catalyses a 2-demethylmenaquinol + S-adenosyl-L-methionine = a menaquinol + S-adenosyl-L-homocysteine + H(+). The protein operates within quinol/quinone metabolism; menaquinone biosynthesis; menaquinol from 1,4-dihydroxy-2-naphthoate: step 2/2. Functionally, methyltransferase required for the conversion of demethylmenaquinol (DMKH2) to menaquinol (MKH2). In Parafrankia sp. (strain EAN1pec), this protein is Demethylmenaquinone methyltransferase.